A 752-amino-acid polypeptide reads, in one-letter code: Photosystem I P700 chlorophyll a apoprotein A1 (752 aa).

Transmembrane regions (helical) follow at residues 73 to 96 (IFAA…FHGA), 159 to 182 (LYCT…FHYH), 198 to 222 (LNHH…HVSA), 294 to 312 (IAHH…GHQY), 349 to 372 (WHAQ…HHMY), 388 to 414 (LCIF…IFMV), 436 to 458 (AIIS…LYIH), and 533 to 551 (FLIH…LILL). [4Fe-4S] cluster is bound by residues cysteine 575 and cysteine 584. 2 helical membrane-spanning segments follow: residues 591-612 (HVFL…HFSW) and 666-688 (LSAY…MFLF). Histidine 677 contacts chlorophyll a'. Residues methionine 685 and tyrosine 693 each contribute to the chlorophyll a site. Tryptophan 694 is a binding site for phylloquinone. The helical transmembrane segment at 726–746 (AVGVAHYLLGGIATTWAFFHA) threads the bilayer.

This sequence belongs to the PsaA/PsaB family. The PsaA/B heterodimer binds the P700 chlorophyll special pair and subsequent electron acceptors. PSI consists of a core antenna complex that captures photons, and an electron transfer chain that converts photonic excitation into a charge separation. The cyanobacterial PSI reaction center is composed of one copy each of PsaA,B,C,D,E,F,I,J,K,L,M and X, and forms trimeric complexes. The cofactor is PSI electron transfer chain: 5 chlorophyll a, 1 chlorophyll a', 2 phylloquinones and 3 4Fe-4S clusters. PSI core antenna: 90 chlorophyll a, 22 carotenoids, 3 phospholipids and 1 galactolipid. P700 is a chlorophyll a/chlorophyll a' dimer, A0 is one or more chlorophyll a, A1 is one or both phylloquinones and FX is a shared 4Fe-4S iron-sulfur center..

The protein resides in the cellular thylakoid membrane. It catalyses the reaction reduced [plastocyanin] + hnu + oxidized [2Fe-2S]-[ferredoxin] = oxidized [plastocyanin] + reduced [2Fe-2S]-[ferredoxin]. Functionally, psaA and PsaB bind P700, the primary electron donor of photosystem I (PSI), as well as the electron acceptors A0, A1 and FX. PSI is a plastocyanin/cytochrome c6-ferredoxin oxidoreductase, converting photonic excitation into a charge separation, which transfers an electron from the donor P700 chlorophyll pair to the spectroscopically characterized acceptors A0, A1, FX, FA and FB in turn. Oxidized P700 is reduced on the lumenal side of the thylakoid membrane by plastocyanin or cytochrome c6. The sequence is that of Photosystem I P700 chlorophyll a apoprotein A1 from Nostoc sp. (strain PCC 7120 / SAG 25.82 / UTEX 2576).